Here is a 91-residue protein sequence, read N- to C-terminus: Putative ribonuclease inhibitor YrdF (91 aa).

This sequence belongs to the barstar family.

It is found in the cytoplasm. In Bacillus subtilis (strain 168), this protein is Putative ribonuclease inhibitor YrdF (yrdF).